We begin with the raw amino-acid sequence, 111 residues long: Ig kappa chain V-III region PC 7940 (111 aa).

Residues 1-23 (DIVLTQSPASLAVSLGQRATISC) are framework-1. An intrachain disulfide couples C23 to C92. Residues 24–38 (RASKSVSAFGYSYMH) are complementarity-determining-1. The segment at 39–53 (WYQQKPGQPPKLLIY) is framework-2. Positions 54 to 60 (LASNLES) are complementarity-determining-2. The framework-3 stretch occupies residues 61 to 92 (GVPARFSGSGSGTDFTLNIHPVEEEDAVTYYC). Positions 93–101 (QHSRELPPT) are complementarity-determining-3. The framework-4 stretch occupies residues 102 to 111 (FGGGTKLEIK).

In Mus musculus (Mouse), this protein is Ig kappa chain V-III region PC 7940.